The sequence spans 226 residues: MALSDADVQKQIKHMMAFIEQEANEKAEEIDAKAEEEFNIEKGRLVQTQRLKIMEYYEKKEKQIEQQKKIQMSNLMNQARLKVLRARDDLITDLLNEAKQRLSKVVKDTTRYQVLLDGLVLQGLYQLLEPRMIVRCRKQDFPLVKAAVQKAIPMYKIATKNDVDVQIDQESYLPEDIAGGVEIYNGDRKIKVSNTLESRLDLIAQQMMPEVRGALFGANANRKFLD.

N-acetylalanine is present on Ala-2. Tyr-56 bears the Phosphotyrosine mark.

This sequence belongs to the V-ATPase E subunit family. As to quaternary structure, V-ATPase is a heteromultimeric enzyme made up of two complexes: the ATP-hydrolytic V1 complex and the proton translocation V0 complex. The V1 complex consists of three catalytic AB heterodimers that form a heterohexamer, three peripheral stalks each consisting of EG heterodimers, one central rotor including subunits D and F, and the regulatory subunits C and H. The proton translocation complex V0 consists of the proton transport subunit a, a ring of proteolipid subunits c9c'', rotary subunit d, subunits e and f, and the accessory subunits ATP6AP1/Ac45 and ATP6AP2/PRR. Interacts with RABL2/RABL2A; binds preferentially to GTP-bound RABL2. Interacts with ALDOC. Interacts with RAB11B. As to expression, kidney; localizes to early distal nephron, encompassing thick ascending limbs and distal convoluted tubules (at protein level). Ubiquitous. High expression in the skin.

It localises to the apical cell membrane. The protein resides in the cytoplasmic vesicle. Its subcellular location is the secretory vesicle. It is found in the synaptic vesicle membrane. The protein localises to the clathrin-coated vesicle membrane. Functionally, subunit of the V1 complex of vacuolar(H+)-ATPase (V-ATPase), a multisubunit enzyme composed of a peripheral complex (V1) that hydrolyzes ATP and a membrane integral complex (V0) that translocates protons. V-ATPase is responsible for acidifying and maintaining the pH of intracellular compartments and in some cell types, is targeted to the plasma membrane, where it is responsible for acidifying the extracellular environment. This Homo sapiens (Human) protein is V-type proton ATPase subunit E 1 (ATP6V1E1).